A 469-amino-acid chain; its full sequence is Glutamate--tRNA ligase (469 aa).

A 'HIGH' region motif is present at residues 9–19; sequence PSPTGFLHVGG. Zn(2+) contacts are provided by Cys-98, Cys-100, Cys-125, and Asp-127. The 'KMSKS' region motif lies at 236–240; sequence KLSKR. Residue Lys-239 coordinates ATP.

Belongs to the class-I aminoacyl-tRNA synthetase family. Glutamate--tRNA ligase type 1 subfamily. As to quaternary structure, monomer. The cofactor is Zn(2+).

Its subcellular location is the cytoplasm. It carries out the reaction tRNA(Glu) + L-glutamate + ATP = L-glutamyl-tRNA(Glu) + AMP + diphosphate. Catalyzes the attachment of glutamate to tRNA(Glu) in a two-step reaction: glutamate is first activated by ATP to form Glu-AMP and then transferred to the acceptor end of tRNA(Glu). The polypeptide is Glutamate--tRNA ligase (Shewanella loihica (strain ATCC BAA-1088 / PV-4)).